Here is a 376-residue protein sequence, read N- to C-terminus: NADPH oxidase organizer 1 (376 aa).

Residues 1–131 (MAGPRYPVSV…GFFAPQPLDL (131 aa)) form the PX domain. 2 SH3 domains span residues 163 to 225 (LEAQ…EAAP) and 237 to 296 (SSGP…PEGL). The tract at residues 302–376 (GTGFRGGDDP…DSVPHPTTEQ (75 aa)) is disordered. The span at 326 to 335 (APPPTVPTRP) shows a compositional bias: pro residues. Positions 328–337 (PPTVPTRPSP) are proline-rich region; mediates mutually exclusive interactions with itself and NOXA1.

As to quaternary structure, interacts with NOX1, NOXA1, CYBA/p22phox and NCF2/p67phox. Interacts with SH3PXD2A and SH3PXD2B. In terms of tissue distribution, expressed in testis, small and large intestines, liver, kidney and pancreas. Isoform 3 is mainly expressed in colon. Isoform 1 is preferentially expressed in testis.

The protein resides in the cell membrane. Its function is as follows. Constitutively potentiates the superoxide-generating activity of NOX1 and NOX3 and is required for the biogenesis of otoconia/otolith, which are crystalline structures of the inner ear involved in the perception of gravity. Isoform 3 is more potent than isoform 1 in activating NOX3. Together with NOXA1, may also substitute to NCF1/p47phox and NCF2/p67phox in supporting the phagocyte NOX2/gp91phox superoxide-generating activity. This chain is NADPH oxidase organizer 1 (NOXO1), found in Homo sapiens (Human).